The primary structure comprises 175 residues: Protein-export protein SecB (175 aa).

It belongs to the SecB family. As to quaternary structure, homotetramer, a dimer of dimers. One homotetramer interacts with 1 SecA dimer.

It localises to the cytoplasm. One of the proteins required for the normal export of preproteins out of the cell cytoplasm. It is a molecular chaperone that binds to a subset of precursor proteins, maintaining them in a translocation-competent state. It also specifically binds to its receptor SecA. This Ehrlichia chaffeensis (strain ATCC CRL-10679 / Arkansas) protein is Protein-export protein SecB.